Reading from the N-terminus, the 357-residue chain is Sorbitol dehydrogenase (357 aa).

Position 2 is an N-acetylalanine (Ala2). Position 45 (Cys45) interacts with Zn(2+). Tyr51 is a binding site for substrate. Residues His70 and Glu71 each coordinate Zn(2+). Glu156 is a binding site for substrate. The NAD(+) site is built by Ile184, Asp204, and Arg209. 2 positions are modified to phosphoserine: Ser211 and Ser225. Residues 273–275 and 297–299 each bind NAD(+); these read VGL and VFR. Substrate-binding residues include Arg299 and Tyr300.

The protein belongs to the zinc-containing alcohol dehydrogenase family. Homotetramer. Zn(2+) is required as a cofactor. Expressed in liver. Expressed in kidney and epithelial cells of both benign and malignant prostate tissue. Expressed in epididymis (at protein level).

Its subcellular location is the mitochondrion membrane. It localises to the cell projection. The protein localises to the cilium. It is found in the flagellum. The enzyme catalyses keto-D-fructose + NADH + H(+) = D-sorbitol + NAD(+). It carries out the reaction L-threitol + NAD(+) = L-erythrulose + NADH + H(+). The catalysed reaction is xylitol + NAD(+) = D-xylulose + NADH + H(+). It catalyses the reaction ribitol + NAD(+) = D-ribulose + NADH + H(+). The enzyme catalyses (R,R)-butane-2,3-diol + NAD(+) = (R)-acetoin + NADH + H(+). It carries out the reaction L-iditol + NAD(+) = keto-L-sorbose + NADH + H(+). With respect to regulation, inhibited by CP-166,572, an inhibitor that is competitive with fructose. Also competitively inhibited by phenanthroline and 4-methylpyrazole in vitro. Polyol dehydrogenase that catalyzes the reversible NAD(+)-dependent oxidation of various sugar alcohols. Is mostly active with D-sorbitol (D-glucitol), L-threitol, xylitol and ribitol as substrates, leading to the C2-oxidized products D-fructose, L-erythrulose, D-xylulose, and D-ribulose, respectively. Is a key enzyme in the polyol pathway that interconverts glucose and fructose via sorbitol, which constitutes an important alternate route for glucose metabolism. The polyol pathway is believed to be involved in the etiology of diabetic complications, such as diabetic neuropathy and retinopathy, induced by hyperglycemia. May play a role in sperm motility by using sorbitol as an alternative energy source for sperm motility. May have a more general function in the metabolism of secondary alcohols since it also catalyzes the stereospecific oxidation of (2R,3R)-2,3-butanediol. To a lesser extent, can also oxidize L-arabinitol, galactitol and D-mannitol and glycerol in vitro. Oxidizes neither ethanol nor other primary alcohols. Cannot use NADP(+) as the electron acceptor. The chain is Sorbitol dehydrogenase (SORD) from Homo sapiens (Human).